Consider the following 209-residue polypeptide: Molybdenum cofactor guanylyltransferase (209 aa).

GTP is bound by residues L14 to G16, K31, and D104. Residue D104 coordinates Mg(2+).

The protein belongs to the MobA family. As to quaternary structure, monomer. Mg(2+) serves as cofactor.

The protein resides in the cytoplasm. It catalyses the reaction Mo-molybdopterin + GTP + H(+) = Mo-molybdopterin guanine dinucleotide + diphosphate. Its function is as follows. Transfers a GMP moiety from GTP to Mo-molybdopterin (Mo-MPT) cofactor (Moco or molybdenum cofactor) to form Mo-molybdopterin guanine dinucleotide (Mo-MGD) cofactor. In Helicobacter pylori (strain J99 / ATCC 700824) (Campylobacter pylori J99), this protein is Molybdenum cofactor guanylyltransferase.